Consider the following 211-residue polypeptide: NADH-quinone oxidoreductase subunit I (211 aa).

A disordered region spans residues methionine 1–arginine 27. 4Fe-4S ferredoxin-type domains lie at leucine 71 to alanine 101 and arginine 117 to aspartate 146. Positions 81, 84, 87, 91, 126, 129, 132, and 136 each coordinate [4Fe-4S] cluster.

Belongs to the complex I 23 kDa subunit family. In terms of assembly, NDH-1 is composed of 14 different subunits. Subunits NuoA, H, J, K, L, M, N constitute the membrane sector of the complex. [4Fe-4S] cluster is required as a cofactor.

The protein resides in the cell membrane. The enzyme catalyses a quinone + NADH + 5 H(+)(in) = a quinol + NAD(+) + 4 H(+)(out). Functionally, NDH-1 shuttles electrons from NADH, via FMN and iron-sulfur (Fe-S) centers, to quinones in the respiratory chain. The immediate electron acceptor for the enzyme in this species is believed to be menaquinone. Couples the redox reaction to proton translocation (for every two electrons transferred, four hydrogen ions are translocated across the cytoplasmic membrane), and thus conserves the redox energy in a proton gradient. The sequence is that of NADH-quinone oxidoreductase subunit I from Mycobacterium tuberculosis (strain ATCC 25177 / H37Ra).